The primary structure comprises 191 residues: Protein GrpE (191 aa).

The segment covering 1–13 (MSEKKNKKEKLAE) has biased composition (basic and acidic residues). Residues 1–40 (MSEKKNKKEKLAEEIEQEELNSLDESVETVEEEATEETLT) are disordered. The span at 14-40 (EIEQEELNSLDESVETVEEEATEETLT) shows a compositional bias: acidic residues.

The protein belongs to the GrpE family. As to quaternary structure, homodimer.

It is found in the cytoplasm. Functionally, participates actively in the response to hyperosmotic and heat shock by preventing the aggregation of stress-denatured proteins, in association with DnaK and GrpE. It is the nucleotide exchange factor for DnaK and may function as a thermosensor. Unfolded proteins bind initially to DnaJ; upon interaction with the DnaJ-bound protein, DnaK hydrolyzes its bound ATP, resulting in the formation of a stable complex. GrpE releases ADP from DnaK; ATP binding to DnaK triggers the release of the substrate protein, thus completing the reaction cycle. Several rounds of ATP-dependent interactions between DnaJ, DnaK and GrpE are required for fully efficient folding. This is Protein GrpE from Listeria innocua serovar 6a (strain ATCC BAA-680 / CLIP 11262).